A 235-amino-acid polypeptide reads, in one-letter code: MAHQPPNRPPLIGDPSGPAPPYPFRMSGLVISGFGRGSKELGIPTANLPVDDAQTPWISSIPSGVYFGWASLNLPASHPDSLTSSAAAAAAAAAAAAAPGEDGGGAGEQRQRGGNGFAVYPMVMSIGYNPFYKNTVRSAEVHVLHRFGADFYGVEMRLLIAGFIREEKDYSGLEALIADIEFDCEVAKRSLAREGWAPSGVDVEVDVPGEGVKVLRGSLECGWLIRPDELGEGGK.

Residues Thr45 and Asn47 each coordinate Mg(2+). Catalysis depends on Glu140, which acts as the Nucleophile.

The protein belongs to the flavokinase family. Zn(2+) serves as cofactor. The cofactor is Mg(2+).

The catalysed reaction is riboflavin + ATP = FMN + ADP + H(+). Its pathway is cofactor biosynthesis; FMN biosynthesis; FMN from riboflavin (ATP route): step 1/1. Its function is as follows. Catalyzes the phosphorylation of riboflavin (vitamin B2) to form flavin mononucleotide (FMN) coenzyme. This chain is Riboflavin kinase (FMN1), found in Chaetomium globosum (strain ATCC 6205 / CBS 148.51 / DSM 1962 / NBRC 6347 / NRRL 1970) (Soil fungus).